The primary structure comprises 126 residues: Putative lipoprotein LprD (126 aa).

The N-terminal stretch at 1 to 21 (MSTTRRRRPALIALVIIATCG) is a signal peptide. Cys-22 carries N-palmitoyl cysteine lipidation. Cys-22 carries S-diacylglycerol cysteine lipidation. Residues 40–60 (FQNLGYALQWPLFAWFCVYAY) form a helical membrane-spanning segment. The tract at residues 70 to 101 (PPQPPTGGAAAEIPAGLLPERPKPAQQPPDDP) is disordered.

To M.leprae ML1177.

It localises to the cell membrane. The chain is Putative lipoprotein LprD (lprD) from Mycobacterium tuberculosis (strain CDC 1551 / Oshkosh).